A 226-amino-acid polypeptide reads, in one-letter code: N-acetyltransferase family 8 member 2 (226 aa).

Transmembrane regions (helical) follow at residues 33–55 (FYHVLTLPHSLLLFPGVPVTIIL) and 60–82 (WLLATVYSFLFLLCLRLIFWVSC). Positions 69 to 221 (LFLLCLRLIF…FHFTYSLPSV (153 aa)) constitute an N-acetyltransferase domain. An N6-acetyllysine modification is found at Lys204.

Belongs to the camello family.

The protein localises to the membrane. Functionally, probable acetyltransferase. Has no detectable histone acetyltransferase activity towards histone H3 or H4. This Rattus norvegicus (Rat) protein is N-acetyltransferase family 8 member 2.